Consider the following 365-residue polypeptide: Chloroplast protein FOR GROWTH AND FERTILITY 1 (365 aa).

2 disordered regions span residues 1–30 (MERL…LPRL) and 62–90 (YTPI…PGFL). The N-terminal 79 residues, 1-79 (MERLLQPSSS…TNNSFNGSPK (79 aa)), are a transit peptide targeting the chloroplast. Low complexity-rich tracts occupy residues 7 to 24 (PSSS…SRTS) and 62 to 77 (YTPI…FNGS). 7 helical membrane passes run 109–129 (VILI…PPAF), 139–159 (GWLT…LSGP), 182–202 (ALWG…FLLL), 218–238 (IVGL…SEIP), 274–294 (GVVH…LALP), 301–321 (AFLI…TAFI), and 345–365 (LVAI…FSLY).

In terms of tissue distribution, mostly expressed in leaves and flowers, to a lower extent, in stems, roots, floral bud, inflorescence and siliques, and, barely, in seedlings.

It localises to the plastid. The protein resides in the chloroplast membrane. Its subcellular location is the plastid membrane. Its function is as follows. Together with CGF2, essential protein which supports female gametogenesis and embryogenesis, probably by securing local energy supply. The polypeptide is Chloroplast protein FOR GROWTH AND FERTILITY 1 (Arabidopsis thaliana (Mouse-ear cress)).